Reading from the N-terminus, the 529-residue chain is Transcription factor BIM1 (529 aa).

Disordered regions lie at residues 1–91, 245–291, 425–450, and 491–529; these read MELP…HVLP, KKES…RRSK, RVAS…EEVL, and AKQS…KTGQ. Pro residues predominate over residues 76 to 86; sequence KPPPPAPPPPL. Basic and acidic residues-rich tracts occupy residues 255–265 and 282–291; these read HRVDLRVKADV and SATEQRRRSK. Positions 276 to 326 constitute a bHLH domain; sequence TPRSKHSATEQRRRSKINDRFQMLRQLIPNSDQKRDKASFLLEVIEYIQFL. Residues 426–438 show a composition bias toward low complexity; it reads VASSEAVEPSPSS. Basic and acidic residues predominate over residues 499–517; the sequence is FKDHEVREPVSRTRNDNVK. Over residues 518 to 529 the composition is skewed to basic residues; it reads QTRKPKRLKTGQ.

Homodimer. Interacts with BZR2/BES1 through both C-terminal and bHLH domains. Also interacts with LHW. As to expression, expressed constitutively in roots.

Its subcellular location is the nucleus. Positive brassinosteroid-signaling protein. Transcription factor that bind specifically to the DNA sequence 5'-CANNTG-3'(E box). Can bind individually to the promoter as a homodimer or synergistically as a heterodimer with BZR2/BES1. Does not itself activate transcription but enhances BZR2/BES1-mediated target gene activation. The polypeptide is Transcription factor BIM1 (BIM1) (Arabidopsis thaliana (Mouse-ear cress)).